A 589-amino-acid chain; its full sequence is LRR receptor-like serine/threonine-protein kinase FEI 2 (589 aa).

The N-terminal stretch at 1–28 is a signal peptide; that stretch reads MGICLMKRCCSWFLLISFLSALTNENEA. Residues 29-236 lie on the Extracellular side of the membrane; sequence ISPDGEALLS…TGQGGNNPKR (208 aa). LRR repeat units follow at residues 72-96, 97-120, 122-144, 145-168, and 170-193; these read TKRV…LGKL, DQLR…LGNC, ALEG…IGNL, SGLK…LGQL, and RLTK…LLAR. 2 N-linked (GlcNAc...) asparagine glycosylation sites follow: Asn-119 and Asn-143. Asn-175, Asn-215, and Asn-219 each carry an N-linked (GlcNAc...) asparagine glycan. The chain crosses the membrane as a helical span at residues 237 to 257; it reads LLISASATVGGLLLVALMCFW. Over 258 to 589 the chain is Cytoplasmic; the sequence is GCFLYKKLGR…PSDFYDSSSD (332 aa). In terms of domain architecture, Protein kinase spans 304–576; the sequence is LNEEHIIGCG…VVQLLESEVM (273 aa). ATP-binding positions include 310 to 318 and Lys-332; that span reads IGCGGFGTV. Ser-384 is modified (phosphoserine). The active-site Proton acceptor is the Asp-427. Phosphothreonine is present on residues Thr-460, Thr-461, and Thr-466. Tyr-474 bears the Phosphotyrosine mark.

This sequence belongs to the protein kinase superfamily. Ser/Thr protein kinase family. Interacts with the ACC synthases ACS5 and ACS9 but not ACS2, via the kinase domain. Post-translationally, autophosphorylated. In terms of tissue distribution, expressed in the root meristem and elongation zone, and in hypocotyls of etiolated seedlings.

The protein localises to the cell membrane. The catalysed reaction is L-seryl-[protein] + ATP = O-phospho-L-seryl-[protein] + ADP + H(+). It catalyses the reaction L-threonyl-[protein] + ATP = O-phospho-L-threonyl-[protein] + ADP + H(+). Involved in the signaling pathway that regulates cell wall function, including cellulose biosynthesis, likely via an 1-aminocyclopropane-1-carboxylic acid (ACC)-mediated signal (a precursor of ethylene). This Arabidopsis thaliana (Mouse-ear cress) protein is LRR receptor-like serine/threonine-protein kinase FEI 2 (FEI2).